We begin with the raw amino-acid sequence, 323 residues long: Malate dehydrogenase (323 aa).

NAD(+) is bound at residue 11-17 (GAAGQIA). Substrate-binding residues include R92 and R98. NAD(+) is bound by residues N105, Q112, and 129 to 131 (VGN). Positions 131 and 162 each coordinate substrate. H187 acts as the Proton acceptor in catalysis.

This sequence belongs to the LDH/MDH superfamily. MDH type 2 family.

It carries out the reaction (S)-malate + NAD(+) = oxaloacetate + NADH + H(+). Catalyzes the reversible oxidation of malate to oxaloacetate. This Corynebacterium efficiens (strain DSM 44549 / YS-314 / AJ 12310 / JCM 11189 / NBRC 100395) protein is Malate dehydrogenase.